The following is a 245-amino-acid chain: 1-(5-phosphoribosyl)-5-[(5-phosphoribosylamino)methylideneamino] imidazole-4-carboxamide isomerase (245 aa).

Catalysis depends on aspartate 7, which acts as the Proton acceptor. Aspartate 129 serves as the catalytic Proton donor.

This sequence belongs to the HisA/HisF family.

The protein resides in the cytoplasm. It catalyses the reaction 1-(5-phospho-beta-D-ribosyl)-5-[(5-phospho-beta-D-ribosylamino)methylideneamino]imidazole-4-carboxamide = 5-[(5-phospho-1-deoxy-D-ribulos-1-ylimino)methylamino]-1-(5-phospho-beta-D-ribosyl)imidazole-4-carboxamide. The protein operates within amino-acid biosynthesis; L-histidine biosynthesis; L-histidine from 5-phospho-alpha-D-ribose 1-diphosphate: step 4/9. In Shewanella putrefaciens (strain CN-32 / ATCC BAA-453), this protein is 1-(5-phosphoribosyl)-5-[(5-phosphoribosylamino)methylideneamino] imidazole-4-carboxamide isomerase.